Consider the following 945-residue polypeptide: Sensor kinase CckA (945 aa).

The next 2 membrane-spanning stretches (helical) occupy residues 111–131 (ALRLLIVGILLMGAAFIYFLF) and 139–159 (FALVLMGVLSMVGVFYLFGAA). PAS domains lie at 171 to 212 (HQDL…TDAD), 313 to 341 (LDHAPAGFFSANPAGRIIYLNATLAEWLG), and 432 to 505 (AEVR…FAGQ). The Histidine kinase domain maps to 574–797 (GIAHDFNNVL…TFKIFLPRLI (224 aa)). A Phosphohistidine; by autocatalysis modification is found at H577. A Response regulatory domain is found at 825–941 (TVLLVEDEDA…QLATTVKEML (117 aa)). D876 carries the post-translational modification 4-aspartylphosphate.

It localises to the cell inner membrane. It catalyses the reaction ATP + protein L-histidine = ADP + protein N-phospho-L-histidine.. In terms of biological role, component of a regulatory phosphorelay system that controls B.abortus cell growth, division, and intracellular survival inside mammalian host cells. This signaling pathway is composed of CckA, ChpT, CtrA and CpdR. CckA autophosphorylates in the presence of ATP on a conserved His residue and transfers a phosphoryl group to a conserved Asp residue on its C-terminal receiver domain. CckA-P transfers phosphoryl groups to the ChpT phosphotransferase. The protein is Sensor kinase CckA of Brucella abortus (strain 2308).